The following is a 380-amino-acid chain: Cytochrome b (380 aa).

The next 4 helical transmembrane spans lie at 33–53, 77–98, 113–133, and 178–198; these read FGSL…FLAM, WLIR…YMHI, WNIG…GYVL, and FFAF…LHLL. Residues His-83 and His-97 each coordinate heme b. Residues His-182 and His-196 each coordinate heme b. Residue His-201 participates in a ubiquinone binding. A run of 4 helical transmembrane segments spans residues 226-246, 288-308, 320-340, and 347-367; these read YKDL…ALFA, LGGV…PFLH, LTQM…WIGG, and FIII…VLFP.

Belongs to the cytochrome b family. As to quaternary structure, the cytochrome bc1 complex contains 3 respiratory subunits (MT-CYB, CYC1 and UQCRFS1), 2 core proteins (UQCRC1 and UQCRC2) and probably 6 low-molecular weight proteins. The cofactor is heme b.

The protein localises to the mitochondrion inner membrane. In terms of biological role, component of the ubiquinol-cytochrome c reductase complex (complex III or cytochrome b-c1 complex) that is part of the mitochondrial respiratory chain. The b-c1 complex mediates electron transfer from ubiquinol to cytochrome c. Contributes to the generation of a proton gradient across the mitochondrial membrane that is then used for ATP synthesis. The chain is Cytochrome b (mt-cyb) from Gadus morhua (Atlantic cod).